Consider the following 420-residue polypeptide: Serine hydroxymethyltransferase (420 aa).

(6S)-5,6,7,8-tetrahydrofolate-binding positions include L121 and 125-127 (GHL). The residue at position 229 (K229) is an N6-(pyridoxal phosphate)lysine.

The protein belongs to the SHMT family. Homodimer. It depends on pyridoxal 5'-phosphate as a cofactor.

It is found in the cytoplasm. The enzyme catalyses (6R)-5,10-methylene-5,6,7,8-tetrahydrofolate + glycine + H2O = (6S)-5,6,7,8-tetrahydrofolate + L-serine. The protein operates within one-carbon metabolism; tetrahydrofolate interconversion. Its pathway is amino-acid biosynthesis; glycine biosynthesis; glycine from L-serine: step 1/1. Functionally, catalyzes the reversible interconversion of serine and glycine with tetrahydrofolate (THF) serving as the one-carbon carrier. This reaction serves as the major source of one-carbon groups required for the biosynthesis of purines, thymidylate, methionine, and other important biomolecules. Also exhibits THF-independent aldolase activity toward beta-hydroxyamino acids, producing glycine and aldehydes, via a retro-aldol mechanism. The protein is Serine hydroxymethyltransferase of Pasteurella multocida (strain Pm70).